The following is a 296-amino-acid chain: Deleted in azoospermia-like (296 aa).

The span at 1-18 (MSAANPETPNSTISREAN) shows a compositional bias: polar residues. The interval 1–25 (MSAANPETPNSTISREANTQSSSAA) is disordered. The region spanning 40 to 115 (NTVFVGGIDV…KKLKLGPAIR (76 aa)) is the RRM domain. Positions 80-132 (KGYGFVSFFNDVDVQKIVESQINFHGKKLKLGPAIRKQNLCAYHVQPRPLVFN) are homodimerization. The region spanning 167-190 (AYPPYPNSPVQVITGYQLPVYNYQ) is the DAZ domain. Residue Y277 is modified to Phosphotyrosine.

Belongs to the RRM DAZ family. In terms of assembly, homodimer and heterodimer. Forms a heterodimer with DAZ. Interacts with BOLL, DAZAP1 and DAZAP2. Interacts with PUM2 Multiple DAZL RRMs can bind to a single RNA containing multiple GUU triplets. Testis specific.

The protein localises to the cytoplasm. The protein resides in the nucleus. In terms of biological role, RNA-binding protein, which is essential for gametogenesis in both males and females. Plays a central role during spermatogenesis. Acts by binding to the 3'-UTR of mRNA, specifically recognizing GUU triplets, and thereby regulating the translation of key transcripts. This is Deleted in azoospermia-like (DAZL) from Callithrix jacchus (White-tufted-ear marmoset).